The sequence spans 97 residues: Plastocyanin (97 aa).

Residues 1–97 (AEVKLGADDG…AGMKGEVTVT (97 aa)) enclose the Plastocyanin-like domain. Residues His37, Cys82, His85, and Met90 each coordinate Cu cation.

This sequence belongs to the plastocyanin family. It depends on Cu(2+) as a cofactor.

Its subcellular location is the plastid. It localises to the chloroplast thylakoid membrane. In terms of biological role, participates in electron transfer between P700 and the cytochrome b6-f complex in photosystem I. The protein is Plastocyanin (PETE) of Daucus carota (Wild carrot).